A 79-amino-acid polypeptide reads, in one-letter code: Small ribosomal subunit protein bS18B (79 aa).

It belongs to the bacterial ribosomal protein bS18 family. In terms of assembly, part of the 30S ribosomal subunit. Forms a tight heterodimer with protein bS6.

Its function is as follows. Binds as a heterodimer with protein bS6 to the central domain of the 16S rRNA, where it helps stabilize the platform of the 30S subunit. The sequence is that of Small ribosomal subunit protein bS18B from Saccharopolyspora erythraea (strain ATCC 11635 / DSM 40517 / JCM 4748 / NBRC 13426 / NCIMB 8594 / NRRL 2338).